A 72-amino-acid chain; its full sequence is Translation initiation factor IF-1 (72 aa).

The S1-like domain occupies 1 to 72 (MSKDDVIEVE…TRGRIIYRHK (72 aa)).

It belongs to the IF-1 family. In terms of assembly, component of the 30S ribosomal translation pre-initiation complex which assembles on the 30S ribosome in the order IF-2 and IF-3, IF-1 and N-formylmethionyl-tRNA(fMet); mRNA recruitment can occur at any time during PIC assembly.

It localises to the cytoplasm. Functionally, one of the essential components for the initiation of protein synthesis. Stabilizes the binding of IF-2 and IF-3 on the 30S subunit to which N-formylmethionyl-tRNA(fMet) subsequently binds. Helps modulate mRNA selection, yielding the 30S pre-initiation complex (PIC). Upon addition of the 50S ribosomal subunit IF-1, IF-2 and IF-3 are released leaving the mature 70S translation initiation complex. The polypeptide is Translation initiation factor IF-1 (Carboxydothermus hydrogenoformans (strain ATCC BAA-161 / DSM 6008 / Z-2901)).